A 206-amino-acid chain; its full sequence is Large ribosomal subunit protein uL4 (206 aa).

Belongs to the universal ribosomal protein uL4 family. Part of the 50S ribosomal subunit.

Its function is as follows. One of the primary rRNA binding proteins, this protein initially binds near the 5'-end of the 23S rRNA. It is important during the early stages of 50S assembly. It makes multiple contacts with different domains of the 23S rRNA in the assembled 50S subunit and ribosome. Forms part of the polypeptide exit tunnel. The sequence is that of Large ribosomal subunit protein uL4 from Rhodopseudomonas palustris (strain BisB5).